The chain runs to 602 residues: Elongation factor 4 (602 aa).

In terms of domain architecture, tr-type G spans aspartate 8–lysine 190. GTP contacts are provided by residues aspartate 20–threonine 25 and asparagine 137–aspartate 140.

It belongs to the TRAFAC class translation factor GTPase superfamily. Classic translation factor GTPase family. LepA subfamily.

Its subcellular location is the cell inner membrane. It carries out the reaction GTP + H2O = GDP + phosphate + H(+). In terms of biological role, required for accurate and efficient protein synthesis under certain stress conditions. May act as a fidelity factor of the translation reaction, by catalyzing a one-codon backward translocation of tRNAs on improperly translocated ribosomes. Back-translocation proceeds from a post-translocation (POST) complex to a pre-translocation (PRE) complex, thus giving elongation factor G a second chance to translocate the tRNAs correctly. Binds to ribosomes in a GTP-dependent manner. The chain is Elongation factor 4 from Cereibacter sphaeroides (strain ATCC 17029 / ATH 2.4.9) (Rhodobacter sphaeroides).